Consider the following 467-residue polypeptide: AT-rich interactive domain-containing protein cfi-1 (467 aa).

Residues methionine 1–leucine 56 are disordered. Residues glycine 27–lysine 48 show a composition bias toward basic and acidic residues. Residues aspartate 181–glutamate 273 enclose the ARID domain. An REKLES domain is found at alanine 356–valine 464. Residues leucine 383–serine 441 are disordered. Positions isoleucine 409–valine 420 are enriched in basic and acidic residues. The segment covering lysine 421 to isoleucine 430 has biased composition (polar residues).

In terms of tissue distribution, present in IL2 and URA neurons, and in AVD and PVC interneurons. Present in muscles from head and pharynx (at protein level).

It localises to the nucleus. In terms of biological role, transcription factor. Regulates neuronal subtype identity. Involved in motor neuron fate determination and maintenance, acting as a transcriptional repressor to counteract gene activation by transcription factor unc-3 in a subset of motor neurons. Probably acts by binding to specific promoter elements. Promotes differentiation of URA sensory neurons and prevents them from expressing male-specific CEM neuronal features. Promotes differentiation of AVD and PVC interneurons and their glutamate receptor expression. In Caenorhabditis elegans, this protein is AT-rich interactive domain-containing protein cfi-1 (cfi-1).